The chain runs to 314 residues: ATP synthase gamma chain (314 aa).

Belongs to the ATPase gamma chain family. In terms of assembly, F-type ATPases have 2 components, CF(1) - the catalytic core - and CF(0) - the membrane proton channel. CF(1) has five subunits: alpha(3), beta(3), gamma(1), delta(1), epsilon(1). CF(0) has three main subunits: a, b and c.

The protein resides in the cellular thylakoid membrane. Functionally, produces ATP from ADP in the presence of a proton gradient across the membrane. The gamma chain is believed to be important in regulating ATPase activity and the flow of protons through the CF(0) complex. This Synechococcus sp. (strain JA-3-3Ab) (Cyanobacteria bacterium Yellowstone A-Prime) protein is ATP synthase gamma chain.